A 132-amino-acid chain; its full sequence is UPF0299 membrane protein YohJ (132 aa).

At 1-6 (MSKTLN) the chain is on the periplasmic side. The helical transmembrane segment at 7–27 (IIWQYLRAFVLIYACLYAGIF) threads the bilayer. Residues 28–30 (IAS) lie on the Cytoplasmic side of the membrane. A helical transmembrane segment spans residues 31–51 (LLPVTIPGSIIGMLILFVLLA). Residues 52–62 (LQILPAKWVNP) are Periplasmic-facing. The chain crosses the membrane as a helical span at residues 63-83 (GCYVLIRYMALLFVPIGVGVM). The Cytoplasmic portion of the chain corresponds to 84–92 (QYFDLLRAQ). A helical membrane pass occupies residues 93-113 (FGPVVVSCAISTLVVFLVVSW). Topologically, residues 114-132 (SSQLVHGERKVVGQKGSEE) are periplasmic.

The protein belongs to the UPF0299 family.

The protein localises to the cell inner membrane. The polypeptide is UPF0299 membrane protein YohJ (yohJ) (Escherichia coli O157:H7).